The following is a 737-amino-acid chain: MGESKCPVNFAGGGTRNKDWWPDQLRLNILRQHTSASNPLDADFDYAAAFNSLDYNALKKDLEALMTDSQDWWPADFGHYGGLFIRMAWHSAGTYRVFDGRGGAGQGQQRFAPLNSWPDNASLDKARRLLWPIKQKYGNKISWADLMILAGNVALESMGFKPFGFSGGRADTWEADESVYWGGEKTWFPKGNDVRYPNDDIYTRDLENPLAASHMGLIYVNPEGPNGNPDPKAAARDIRVTFGRMAMNDEETVALIAGGHSFGKTHGASSGDHCGPEPEAAGLEAQGLGWQSKYGSGSGRDAITSGLEVTWTKTPTRWSTNFLEYLFAFDWELTKSPAGANQWVAKNADAIIPDAFDPSKKHKPQMLTTDLALRYDPAYEKIARRFLENPDQFADAFARAWFKLTHRDMGPRARYVGPEVPSEVLIWQDPIPAVNHPLVDASDIASLKQAILNSGVDRSKFVSTAWAAASTFRGGDKRGGANGARIRLAPQRDWEVNNQPWLKESLAALEKIQSSFNGSRSDRKKISLADLIVLAGCAAVESAAQEAGHAVSVPFTPGRMDASQEETDVESFSHMEPVADGFRNYSTAPTRRRAEHYLVDKAQMLTLSAPEMTALVGGLRALNANYDGSAHGVFTSRPGYLTNDFFVNLLDMGTTWKPTDASGELYEGADRRTGSKKWTATRVDLVFGSHAELRAIAEVYGSSDGERKFVKDFVAAWNKVMNLDRFDLKRENVPARL.

The segment at residues 89–219 (WHSAGTYRVF…LAASHMGLIY (131 aa)) is a cross-link (tryptophyl-tyrosyl-methioninium (Trp-Tyr) (with M-245)). The active-site Proton acceptor is the H90. A cross-link (tryptophyl-tyrosyl-methioninium (Tyr-Met) (with W-89)) is located at residues 219-245 (YVNPEGPNGNPDPKAAARDIRVTFGRM). A heme b-binding site is contributed by H260.

It belongs to the peroxidase family. Peroxidase/catalase subfamily. In terms of assembly, homodimer or homotetramer. The cofactor is heme b. Post-translationally, formation of the three residue Trp-Tyr-Met cross-link is important for the catalase, but not the peroxidase activity of the enzyme.

The protein resides in the cytoplasm. It carries out the reaction H2O2 + AH2 = A + 2 H2O. The catalysed reaction is 2 H2O2 = O2 + 2 H2O. In terms of biological role, bifunctional enzyme with both catalase and broad-spectrum peroxidase activity. The chain is Catalase-peroxidase from Aspergillus terreus (strain NIH 2624 / FGSC A1156).